The chain runs to 357 residues: Adenosine deaminase (357 aa).

Zn(2+) contacts are provided by His-16 and His-18. Residues His-18, Asp-20, and Gly-185 each contribute to the substrate site. Residue His-212 participates in Zn(2+) binding. The active-site Proton donor is Glu-215. Residue Asp-294 participates in Zn(2+) binding. A substrate-binding site is contributed by Asp-295.

Belongs to the metallo-dependent hydrolases superfamily. Adenosine and AMP deaminases family. It depends on Zn(2+) as a cofactor.

The protein resides in the cell membrane. Its subcellular location is the cell junction. It localises to the cytoplasmic vesicle lumen. The protein localises to the cytoplasm. It is found in the lysosome. The catalysed reaction is adenosine + H2O + H(+) = inosine + NH4(+). It carries out the reaction 2'-deoxyadenosine + H2O + H(+) = 2'-deoxyinosine + NH4(+). Catalyzes the hydrolytic deamination of adenosine and 2-deoxyadenosine. Plays an important role in purine metabolism and in adenosine homeostasis. Modulates signaling by extracellular adenosine, and so contributes indirectly to cellular signaling events. May act as a positive regulator of T-cell coactivation. The protein is Adenosine deaminase (ADA) of Gallus gallus (Chicken).